The primary structure comprises 424 residues: Histidine--tRNA ligase (424 aa).

Belongs to the class-II aminoacyl-tRNA synthetase family. As to quaternary structure, homodimer.

The protein resides in the cytoplasm. The catalysed reaction is tRNA(His) + L-histidine + ATP = L-histidyl-tRNA(His) + AMP + diphosphate + H(+). The polypeptide is Histidine--tRNA ligase (Shewanella woodyi (strain ATCC 51908 / MS32)).